The sequence spans 136 residues: Large ribosomal subunit protein uL16 (136 aa).

Belongs to the universal ribosomal protein uL16 family. As to quaternary structure, part of the 50S ribosomal subunit.

Binds 23S rRNA and is also seen to make contacts with the A and possibly P site tRNAs. The chain is Large ribosomal subunit protein uL16 from Pelagibacter ubique (strain HTCC1062).